The following is a 258-amino-acid chain: Acyl-[acyl-carrier-protein]--UDP-N-acetylglucosamine O-acyltransferase (258 aa).

This sequence belongs to the transferase hexapeptide repeat family. LpxA subfamily. As to quaternary structure, homotrimer.

The protein localises to the cytoplasm. The catalysed reaction is a (3R)-hydroxyacyl-[ACP] + UDP-N-acetyl-alpha-D-glucosamine = a UDP-3-O-[(3R)-3-hydroxyacyl]-N-acetyl-alpha-D-glucosamine + holo-[ACP]. It functions in the pathway glycolipid biosynthesis; lipid IV(A) biosynthesis; lipid IV(A) from (3R)-3-hydroxytetradecanoyl-[acyl-carrier-protein] and UDP-N-acetyl-alpha-D-glucosamine: step 1/6. Functionally, involved in the biosynthesis of lipid A, a phosphorylated glycolipid that anchors the lipopolysaccharide to the outer membrane of the cell. This chain is Acyl-[acyl-carrier-protein]--UDP-N-acetylglucosamine O-acyltransferase, found in Pseudomonas entomophila (strain L48).